The primary structure comprises 310 residues: Uracil phosphoribosyltransferase homolog (310 aa).

2 disordered regions span residues 1–27 (MASE…PSPE) and 62–89 (SERD…GNYD). Residues 16–25 (RQVNSTSSPS) are compositionally biased toward polar residues. The residue at position 25 (Ser-25) is a Phosphoserine. Residues Arg-134, Arg-143, and 177–180 (EKGN) each bind GTP. Residue Arg-187 coordinates 5-phospho-alpha-D-ribose 1-diphosphate. The GTP site is built by Arg-204 and Arg-233. Position 239–247 (239–247 (YPILSTGNT)) interacts with 5-phospho-alpha-D-ribose 1-diphosphate. 300 to 302 (THF) provides a ligand contact to uracil.

This sequence belongs to the UPRTase family.

The protein resides in the cytoplasm. It localises to the nucleus. This Mus musculus (Mouse) protein is Uracil phosphoribosyltransferase homolog (Uprt).